A 37-amino-acid polypeptide reads, in one-letter code: MKIRASVRKICENCRLIRRRKRVMVVCSNPKHKQKQG.

The protein belongs to the bacterial ribosomal protein bL36 family.

It is found in the plastid. The polypeptide is Large ribosomal subunit protein bL36c (Aneura mirabilis (Parasitic liverwort)).